We begin with the raw amino-acid sequence, 20 residues long: Pregnancy-associated glycoprotein 61C (20 aa).

The protein belongs to the peptidase A1 family. Post-translationally, N-glycosylated. As to expression, expressed in chorionic epithelium (trophectoderm).

It localises to the secreted. Its subcellular location is the extracellular space. The polypeptide is Pregnancy-associated glycoprotein 61C (Bubalus bubalis (Domestic water buffalo)).